Consider the following 137-residue polypeptide: MKISLTAATVAALVLAAPAFAGDAAKGEKEFNKCKTCHSIIAPDGTEIVKGAKTGPNLYGVVGRTAGTYPEFKYKDSIVALGASGFAWTEEDIATYVKDPGAFLKEKLDDKKAKTGMAFKLAKGGEDVAAYLASVVK.

The first 21 residues, 1–21 (MKISLTAATVAALVLAAPAFA), serve as a signal peptide directing secretion. Heme c is bound by residues Cys34, Cys37, His38, and Met117.

It belongs to the cytochrome c family. Post-translationally, binds 1 heme c group covalently per subunit.

Functionally, cytochrome c2 is found mainly in purple, non-sulfur, photosynthetic bacteria where it functions as the electron donor to the oxidized bacteriochlorophyll in the photophosphorylation pathway. However, it may also have a role in the respiratory chain and is found in some non-photosynthetic bacteria. This chain is Cytochrome c2 (cycA), found in Rhodobacter capsulatus (strain ATCC BAA-309 / NBRC 16581 / SB1003).